The sequence spans 301 residues: GTPase Era (301 aa).

In terms of domain architecture, Era-type G spans 7–175 (YCGFIAIVGR…ASIVRKHLPE (169 aa)). The segment at 15–22 (GRPNVGKS) is G1. 15 to 22 (GRPNVGKS) serves as a coordination point for GTP. A G2 region spans residues 41–45 (QTTRH). Residues 62-65 (DTPG) are G3. Residues 62–66 (DTPGL) and 124–127 (NKVD) contribute to the GTP site. Residues 124–127 (NKVD) form a G4 region. Residues 154-156 (ISA) are G5. One can recognise a KH type-2 domain in the interval 206-283 (LGAELPYSVT…HLELWVKVKS (78 aa)).

This sequence belongs to the TRAFAC class TrmE-Era-EngA-EngB-Septin-like GTPase superfamily. Era GTPase family. Monomer.

It is found in the cytoplasm. The protein localises to the cell inner membrane. In terms of biological role, an essential GTPase that binds both GDP and GTP, with rapid nucleotide exchange. Plays a role in 16S rRNA processing and 30S ribosomal subunit biogenesis and possibly also in cell cycle regulation and energy metabolism. In Salmonella arizonae (strain ATCC BAA-731 / CDC346-86 / RSK2980), this protein is GTPase Era.